Here is a 116-residue protein sequence, read N- to C-terminus: Large ribosomal subunit protein bL19 (116 aa).

It belongs to the bacterial ribosomal protein bL19 family.

This protein is located at the 30S-50S ribosomal subunit interface and may play a role in the structure and function of the aminoacyl-tRNA binding site. The sequence is that of Large ribosomal subunit protein bL19 from Roseiflexus castenholzii (strain DSM 13941 / HLO8).